Reading from the N-terminus, the 284-residue chain is Pseudomurein endoisopeptidase PeiW (284 aa).

Pseudomurein-binding repeat stretches follow at residues 4 to 31, 34 to 65, 70 to 100, and 106 to 137; these read GLNE…YVTT, GYKV…YISI, NGKI…NIIY, and SDHV…YISI. Catalysis depends on residues Cys198, His233, and Asp250.

The protein belongs to the Psimunavirus Pseudomurein endoisopeptidase family. Monomer. Ca(2+) serves as cofactor. Requires Mg(2+) as cofactor.

Its function is as follows. Cysteine protease that cleaves the cell wall of its host methanogen under hydrogen limitation of the latter (autolysis). Cleaves the epsilon-Ala-Lys isopeptide bond in the oligopeptides of pseudomurein. The sequence is that of Pseudomurein endoisopeptidase PeiW (peiW) from Methanothermobacter phage psiM100.